Reading from the N-terminus, the 187-residue chain is Transcriptional activator of sulfur metabolism MET28 (187 aa).

The bZIP domain maps to 105–168 (DKIKQERRRK…EFWKAKLNDI (64 aa)). Residues 106-136 (KIKQERRRKNTEASQRFRIRKKQKNFENMNK) form a basic motif region. The tract at residues 137-151 (LQNLNTQINKLRDRI) is leucine-zipper.

It belongs to the bZIP family. Interacts with MET4 to form a heteromeric complex which also includes CBF1. Forms two alternate complexes associating MET28 with MET4 and either MET31 or MET32. Binds to DNA through the MET4-MET28-CBF1 complex.

It is found in the cytoplasm. The protein localises to the nucleus. Its function is as follows. Acts as an accessory factor in the activation of sulfur amino acids metabolism genes. Possesses no intrinsic transcription activation abilities. Binds to the MET16 promoter as a complex with MET4 and CBF1. Enhances the DNA-binding activity of CBF1. The polypeptide is Transcriptional activator of sulfur metabolism MET28 (MET28) (Saccharomyces cerevisiae (strain ATCC 204508 / S288c) (Baker's yeast)).